A 311-amino-acid polypeptide reads, in one-letter code: tRNA-cytidine(32) 2-sulfurtransferase (311 aa).

Positions 47–52 (SGGKDS) match the PP-loop motif motif. [4Fe-4S] cluster contacts are provided by C122, C125, and C213.

The protein belongs to the TtcA family. In terms of assembly, homodimer. Mg(2+) is required as a cofactor. Requires [4Fe-4S] cluster as cofactor.

Its subcellular location is the cytoplasm. It catalyses the reaction cytidine(32) in tRNA + S-sulfanyl-L-cysteinyl-[cysteine desulfurase] + AH2 + ATP = 2-thiocytidine(32) in tRNA + L-cysteinyl-[cysteine desulfurase] + A + AMP + diphosphate + H(+). It participates in tRNA modification. Functionally, catalyzes the ATP-dependent 2-thiolation of cytidine in position 32 of tRNA, to form 2-thiocytidine (s(2)C32). The sulfur atoms are provided by the cysteine/cysteine desulfurase (IscS) system. The protein is tRNA-cytidine(32) 2-sulfurtransferase of Shigella boydii serotype 4 (strain Sb227).